The following is a 219-amino-acid chain: Phosphate-specific transport system accessory protein PhoU homolog 1 (219 aa).

This sequence belongs to the PhoU family. Homodimer.

The protein localises to the cytoplasm. Plays a role in the regulation of phosphate uptake. This is Phosphate-specific transport system accessory protein PhoU homolog 1 from Methanothermobacter thermautotrophicus (strain ATCC 29096 / DSM 1053 / JCM 10044 / NBRC 100330 / Delta H) (Methanobacterium thermoautotrophicum).